Reading from the N-terminus, the 439-residue chain is Probable E3 ubiquitin-protein ligase makorin-1 (439 aa).

3 consecutive C3H1-type zinc fingers follow at residues 18–45 (WTKH…HDLS), 48–74 (KQTM…HTKP), and 163–190 (EMKK…HGDV). The segment at 73–118 (KPSKQDEVPSSKPSMPLTAAPLAGTPEPVSDGPGGTTGAQEKPQGS) is disordered. The tract at residues 191 to 218 (CDMCGLQVLHPSDTSQRSQHIRACIEAH) is makorin-type Cys-His. The RING-type zinc-finger motif lies at 236–290 (CGVCMEVVFEKTNPSERRFGILSNCCHCYCLKCIRKWRSAKQFESKIIKSCPECR). The segment at 319-348 (GMGTKPCRYFDEGRGTCPFGANCFYKHAFP) adopts a C3H1-type 4 zinc-finger fold. A disordered region spans residues 352-371 (LEEPQPQRRQNGSNGRNRNT). The segment covering 358 to 368 (QRRQNGSNGRN) has biased composition (low complexity).

It carries out the reaction S-ubiquitinyl-[E2 ubiquitin-conjugating enzyme]-L-cysteine + [acceptor protein]-L-lysine = [E2 ubiquitin-conjugating enzyme]-L-cysteine + N(6)-ubiquitinyl-[acceptor protein]-L-lysine.. Its pathway is protein modification; protein ubiquitination. Functionally, E3 ubiquitin ligase catalyzing the covalent attachment of ubiquitin moieties onto substrate proteins. The polypeptide is Probable E3 ubiquitin-protein ligase makorin-1 (Danio rerio (Zebrafish)).